Reading from the N-terminus, the 481-residue chain is Innexin inx6 (481 aa).

The Cytoplasmic portion of the chain corresponds to 1–21 (MYAAVKPLSNYLRLKTVRIYD). Residues 22-42 (PIFTLHSKCTIVILLTCTFLL) form a helical membrane-spanning segment. Residues 43–144 (SAKQYFGEPI…VTKRMYLRYY (102 aa)) are Extracellular-facing. Residues 145 to 165 (QWVFMILLFQSLLFYFPSFLW) form a helical membrane-spanning segment. Topologically, residues 166 to 220 (KVWEGQRMEQLCCEVGDALIVEATYRTRLQMLTRYFRAQFAPIHWCYSIKYAFCE) are cytoplasmic. The chain crosses the membrane as a helical span at residues 221-241 (LLNVFISILNFWLMDVVFNGF). Topologically, residues 242–302 (WYKYIHALAA…VLPLNILNEK (61 aa)) are extracellular. Residues 303-323 (IFAVLYVWFLFIALLAIMNIL) form a helical membrane-spanning segment. Over 324-481 (YRLLVICCPE…MDRFFHESHA (158 aa)) the chain is Cytoplasmic.

It belongs to the pannexin family. In terms of tissue distribution, uniform expression in the imaginal wing disk. Expressed in an outer layer of the pupal developing CNS. Also expressed in pupal retina: cone cells and primary pigment cells.

The protein localises to the cell membrane. It is found in the cell junction. The protein resides in the gap junction. Its function is as follows. Structural components of the gap junctions. This is Innexin inx6 (Inx6) from Drosophila melanogaster (Fruit fly).